Consider the following 195-residue polypeptide: Peptidyl-tRNA hydrolase (195 aa).

Tyrosine 18 contributes to the tRNA binding site. Histidine 23 (proton acceptor) is an active-site residue. 3 residues coordinate tRNA: phenylalanine 69, asparagine 71, and asparagine 117.

It belongs to the PTH family. As to quaternary structure, monomer.

The protein localises to the cytoplasm. The catalysed reaction is an N-acyl-L-alpha-aminoacyl-tRNA + H2O = an N-acyl-L-amino acid + a tRNA + H(+). Functionally, hydrolyzes ribosome-free peptidyl-tRNAs (with 1 or more amino acids incorporated), which drop off the ribosome during protein synthesis, or as a result of ribosome stalling. Its function is as follows. Catalyzes the release of premature peptidyl moieties from peptidyl-tRNA molecules trapped in stalled 50S ribosomal subunits, and thus maintains levels of free tRNAs and 50S ribosomes. This Alcanivorax borkumensis (strain ATCC 700651 / DSM 11573 / NCIMB 13689 / SK2) protein is Peptidyl-tRNA hydrolase.